The primary structure comprises 491 residues: Chromosomal replication initiator protein DnaA (491 aa).

The domain I, interacts with DnaA modulators stretch occupies residues 1-69; that stretch reads MTTWDKCLKK…TIQECHGNDL (69 aa). A domain II region spans residues 69-154; it reads LIIEYSNKKF…KEDEEYSFGL (86 aa). The tract at residues 155 to 371 is domain III, AAA+ region; the sequence is PLKEKYVFDS…GALNRVLTTS (217 aa). Gly-199, Gly-201, Lys-202, and Thr-203 together coordinate ATP. The interval 372 to 491 is domain IV, binds dsDNA; the sequence is KFNHKDPTIE…YELLLDKISR (120 aa).

This sequence belongs to the DnaA family. In terms of assembly, oligomerizes as a right-handed, spiral filament on DNA at oriC.

The protein localises to the cytoplasm. In terms of biological role, plays an essential role in the initiation and regulation of chromosomal replication. ATP-DnaA binds to the origin of replication (oriC) to initiate formation of the DNA replication initiation complex once per cell cycle. Binds the DnaA box (a 9 base pair repeat at the origin) and separates the double-stranded (ds)DNA. Forms a right-handed helical filament on oriC DNA; dsDNA binds to the exterior of the filament while single-stranded (ss)DNA is stabiized in the filament's interior. The ATP-DnaA-oriC complex binds and stabilizes one strand of the AT-rich DNA unwinding element (DUE), permitting loading of DNA polymerase. After initiation quickly degrades to an ADP-DnaA complex that is not apt for DNA replication. Binds acidic phospholipids. This chain is Chromosomal replication initiator protein DnaA, found in Francisella tularensis subsp. holarctica (strain FTNF002-00 / FTA).